The following is a 215-amino-acid chain: Cytochrome b6 (215 aa).

Residues 32–52 (IFYCLGGITFTCFIIQVATGF) form a helical membrane-spanning segment. A heme c-binding site is contributed by Cys-35. 2 residues coordinate heme b: His-86 and His-100. 3 consecutive transmembrane segments (helical) span residues 90-110 (ASMM…TGGF), 116-136 (LTWV…VTGY), and 186-206 (LHTF…FLMI). Residues His-187 and His-202 each contribute to the heme b site.

It belongs to the cytochrome b family. PetB subfamily. The 4 large subunits of the cytochrome b6-f complex are cytochrome b6, subunit IV (17 kDa polypeptide, PetD), cytochrome f and the Rieske protein, while the 4 small subunits are PetG, PetL, PetM and PetN. The complex functions as a dimer. The cofactor is heme b. Heme c is required as a cofactor.

Its subcellular location is the plastid. The protein localises to the chloroplast thylakoid membrane. Its function is as follows. Component of the cytochrome b6-f complex, which mediates electron transfer between photosystem II (PSII) and photosystem I (PSI), cyclic electron flow around PSI, and state transitions. The protein is Cytochrome b6 of Euglena gracilis.